The chain runs to 875 residues: Serine/threonine-protein kinase ATG1 (875 aa).

In terms of domain architecture, Protein kinase spans 22-318 (YSIGPEIGKG…FNEFFNDPLI (297 aa)). ATP contacts are provided by residues 28-36 (IGKGSFATV) and K51. D168 serves as the catalytic Proton acceptor. Residues 367 to 379 (EKSKQDLPAREVS) show a composition bias toward basic and acidic residues. 2 disordered regions span residues 367-422 (EKSK…QPHN) and 470-515 (INPR…DRRI). The segment covering 380-389 (THASESQTKA) has biased composition (polar residues). The segment covering 390 to 405 (VDTRPSSRDEEIKEII) has biased composition (basic and acidic residues). 3 stretches are compositionally biased toward polar residues: residues 406-420 (NKNS…SIQP), 473-490 (RRTS…NNMQ), and 497-508 (LRSNSSGSQRRP).

Belongs to the protein kinase superfamily. Ser/Thr protein kinase family. APG1/unc-51/ULK1 subfamily. As to quaternary structure, homodimer. Forms a ternary complex with ATG13 and ATG17.

The protein localises to the cytoplasm. It is found in the preautophagosomal structure membrane. The catalysed reaction is L-seryl-[protein] + ATP = O-phospho-L-seryl-[protein] + ADP + H(+). It carries out the reaction L-threonyl-[protein] + ATP = O-phospho-L-threonyl-[protein] + ADP + H(+). Functionally, serine/threonine protein kinase involved in the cytoplasm to vacuole transport (Cvt) and found to be essential in autophagy, where it is required for the formation of autophagosomes. Involved in the clearance of protein aggregates which cannot be efficiently cleared by the proteasome. Required for selective autophagic degradation of the nucleus (nucleophagy) as well as for mitophagy which contributes to regulate mitochondrial quantity and quality by eliminating the mitochondria to a basal level to fulfill cellular energy requirements and preventing excess ROS production. Also involved in endoplasmic reticulum-specific autophagic process, in selective removal of ER-associated degradation (ERAD) substrates. Plays a key role in ATG9 and ATG23 cycling through the pre-autophagosomal structure and is necessary to promote ATG18 binding to ATG9 through phosphorylation of ATG9. Catalyzes phosphorylation of ATG4, decreasing the interaction between ATG4 and ATG8 and impairing deconjugation of PE-conjugated forms of ATG8. This is Serine/threonine-protein kinase ATG1 from Debaryomyces hansenii (strain ATCC 36239 / CBS 767 / BCRC 21394 / JCM 1990 / NBRC 0083 / IGC 2968) (Yeast).